A 156-amino-acid chain; its full sequence is Large ribosomal subunit protein uL13 (156 aa).

The protein belongs to the universal ribosomal protein uL13 family. Part of the 50S ribosomal subunit.

Functionally, this protein is one of the early assembly proteins of the 50S ribosomal subunit, although it is not seen to bind rRNA by itself. It is important during the early stages of 50S assembly. This Archaeoglobus fulgidus (strain ATCC 49558 / DSM 4304 / JCM 9628 / NBRC 100126 / VC-16) protein is Large ribosomal subunit protein uL13.